The following is a 361-amino-acid chain: Chorismate synthase (361 aa).

NADP(+) is bound by residues Arg48 and Arg54. FMN contacts are provided by residues 125-127 (RSS), 238-239 (NA), Gly278, 293-297 (KPTSS), and Arg319.

The protein belongs to the chorismate synthase family. As to quaternary structure, homotetramer. FMNH2 serves as cofactor.

The catalysed reaction is 5-O-(1-carboxyvinyl)-3-phosphoshikimate = chorismate + phosphate. It participates in metabolic intermediate biosynthesis; chorismate biosynthesis; chorismate from D-erythrose 4-phosphate and phosphoenolpyruvate: step 7/7. Functionally, catalyzes the anti-1,4-elimination of the C-3 phosphate and the C-6 proR hydrogen from 5-enolpyruvylshikimate-3-phosphate (EPSP) to yield chorismate, which is the branch point compound that serves as the starting substrate for the three terminal pathways of aromatic amino acid biosynthesis. This reaction introduces a second double bond into the aromatic ring system. The polypeptide is Chorismate synthase (Vibrio vulnificus (strain YJ016)).